The primary structure comprises 818 residues: Glycerol-3-phosphate acyltransferase (818 aa).

The HXXXXD motif signature appears at 308–313 (CHRSHM).

It belongs to the GPAT/DAPAT family.

Its subcellular location is the cell inner membrane. It catalyses the reaction sn-glycerol 3-phosphate + an acyl-CoA = a 1-acyl-sn-glycero-3-phosphate + CoA. Its pathway is phospholipid metabolism; CDP-diacylglycerol biosynthesis; CDP-diacylglycerol from sn-glycerol 3-phosphate: step 1/3. The sequence is that of Glycerol-3-phosphate acyltransferase from Alteromonas mediterranea (strain DSM 17117 / CIP 110805 / LMG 28347 / Deep ecotype).